The primary structure comprises 381 residues: MVNLELIEVQEGKAKILIPKAESIYDSPVFYNPRMALNRDIVVVLLNILNPKIVLDALSATGIRGIRFALETPAEEVWLNDISEDAYELMKRNVMLNFDGELRESKGRAILKGEKTIVINHDDANRLMAERHRYFHFIDLDPFGSPMEFLDTALRSAKRRGILGVTATDGAPLCGAHPRACLRKYLAVPLRGELCHEVGTRILVGVIARYAAKYDLGIDVILAYYKDHYFRAFVKLKDGARKGDETLEKLGYIYFDDKTGKFELEQGFLPTRPNAYGPVWLGPLKDEKIVSKMVKEAESLSLARKKQALKLLKMIDQELDIPLFYDTHAIGRRLKIETKKVEEIISALREQGYEATRTHFSPTGIKTSAPYEVFIETIKRI.

The region spanning 7 to 378 (IEVQEGKAKI…APYEVFIETI (372 aa)) is the Trm1 methyltransferase domain. 5 residues coordinate S-adenosyl-L-methionine: Arg39, Arg64, Asp81, Asp123, and Ala124.

It belongs to the class I-like SAM-binding methyltransferase superfamily. Trm1 family.

The catalysed reaction is guanosine(26) in tRNA + 2 S-adenosyl-L-methionine = N(2)-dimethylguanosine(26) in tRNA + 2 S-adenosyl-L-homocysteine + 2 H(+). In terms of biological role, dimethylates a single guanine residue at position 26 of a number of tRNAs using S-adenosyl-L-methionine as donor of the methyl groups. The chain is tRNA (guanine(26)-N(2))-dimethyltransferase from Pyrococcus horikoshii (strain ATCC 700860 / DSM 12428 / JCM 9974 / NBRC 100139 / OT-3).